The primary structure comprises 399 residues: Elongation factor Tu (399 aa).

In terms of domain architecture, tr-type G spans Lys-10–Val-209. The tract at residues Gly-19–Thr-26 is G1. A GTP-binding site is contributed by Gly-19–Thr-26. Residue Thr-26 coordinates Mg(2+). Residues Gly-60 to Ala-64 form a G2 region. The segment at Asp-81–Gly-84 is G3. GTP-binding positions include Asp-81 to His-85 and Asn-136 to Asp-139. Residues Asn-136 to Asp-139 form a G4 region. The segment at Ser-174–Leu-176 is G5.

Belongs to the TRAFAC class translation factor GTPase superfamily. Classic translation factor GTPase family. EF-Tu/EF-1A subfamily. As to quaternary structure, monomer.

It is found in the cytoplasm. It catalyses the reaction GTP + H2O = GDP + phosphate + H(+). GTP hydrolase that promotes the GTP-dependent binding of aminoacyl-tRNA to the A-site of ribosomes during protein biosynthesis. The sequence is that of Elongation factor Tu from Campylobacter curvus (strain 525.92).